Here is an 879-residue protein sequence, read N- to C-terminus: DNA mismatch repair protein MutS (879 aa).

Position 629–636 (629–636) interacts with ATP; it reads GPNMAGKS.

It belongs to the DNA mismatch repair MutS family.

In terms of biological role, this protein is involved in the repair of mismatches in DNA. It is possible that it carries out the mismatch recognition step. This protein has a weak ATPase activity. This Ruegeria sp. (strain TM1040) (Silicibacter sp.) protein is DNA mismatch repair protein MutS.